A 415-amino-acid polypeptide reads, in one-letter code: Gamma-glutamyl phosphate reductase (415 aa).

This sequence belongs to the gamma-glutamyl phosphate reductase family.

It localises to the cytoplasm. It carries out the reaction L-glutamate 5-semialdehyde + phosphate + NADP(+) = L-glutamyl 5-phosphate + NADPH + H(+). The protein operates within amino-acid biosynthesis; L-proline biosynthesis; L-glutamate 5-semialdehyde from L-glutamate: step 2/2. Its function is as follows. Catalyzes the NADPH-dependent reduction of L-glutamate 5-phosphate into L-glutamate 5-semialdehyde and phosphate. The product spontaneously undergoes cyclization to form 1-pyrroline-5-carboxylate. The sequence is that of Gamma-glutamyl phosphate reductase from Cutibacterium acnes (strain DSM 16379 / KPA171202) (Propionibacterium acnes).